Here is a 228-residue protein sequence, read N- to C-terminus: Lipoprotein-releasing system ATP-binding protein LolD (228 aa).

One can recognise an ABC transporter domain in the interval 6 to 228; it reads IKCLNVVKGY…EAGVLNKQGQ (223 aa). 42 to 49 contacts ATP; that stretch reads GASGSGKS.

It belongs to the ABC transporter superfamily. Lipoprotein translocase (TC 3.A.1.125) family. The complex is composed of two ATP-binding proteins (LolD) and two transmembrane proteins (LolC and LolE).

The protein resides in the cell inner membrane. Its function is as follows. Part of the ABC transporter complex LolCDE involved in the translocation of mature outer membrane-directed lipoproteins, from the inner membrane to the periplasmic chaperone, LolA. Responsible for the formation of the LolA-lipoprotein complex in an ATP-dependent manner. The sequence is that of Lipoprotein-releasing system ATP-binding protein LolD from Saccharophagus degradans (strain 2-40 / ATCC 43961 / DSM 17024).